Here is a 273-residue protein sequence, read N- to C-terminus: 4-hydroxy-tetrahydrodipicolinate reductase 1 (273 aa).

Residues 13–18 and Glu39 contribute to the NAD(+) site; that span reads GAAGRM. Arg40 contributes to the NADP(+) binding site. NAD(+)-binding positions include 103–105 and 127–130; these read GTT and SGNM. Catalysis depends on His161, which acts as the Proton donor/acceptor. His162 contributes to the (S)-2,3,4,5-tetrahydrodipicolinate binding site. The Proton donor role is filled by Lys165. 171-172 is a (S)-2,3,4,5-tetrahydrodipicolinate binding site; sequence GT.

The protein belongs to the DapB family.

The protein localises to the cytoplasm. The enzyme catalyses (S)-2,3,4,5-tetrahydrodipicolinate + NAD(+) + H2O = (2S,4S)-4-hydroxy-2,3,4,5-tetrahydrodipicolinate + NADH + H(+). It carries out the reaction (S)-2,3,4,5-tetrahydrodipicolinate + NADP(+) + H2O = (2S,4S)-4-hydroxy-2,3,4,5-tetrahydrodipicolinate + NADPH + H(+). It participates in amino-acid biosynthesis; L-lysine biosynthesis via DAP pathway; (S)-tetrahydrodipicolinate from L-aspartate: step 4/4. In terms of biological role, catalyzes the conversion of 4-hydroxy-tetrahydrodipicolinate (HTPA) to tetrahydrodipicolinate. This Mesorhizobium japonicum (strain LMG 29417 / CECT 9101 / MAFF 303099) (Mesorhizobium loti (strain MAFF 303099)) protein is 4-hydroxy-tetrahydrodipicolinate reductase 1.